Here is a 617-residue protein sequence, read N- to C-terminus: BPI fold-containing family B member 4 (617 aa).

Positions 1 to 17 (MWTAWCVAALSVAAVCG) are cleaved as a signal peptide. Residues 124–149 (RPSDSAYHRGPGRYRSAADPSSAGRL) are disordered. Asn-275 carries N-linked (GlcNAc...) asparagine glycosylation. A disulfide bond links Cys-297 and Cys-334.

Belongs to the BPI/LBP/Plunc superfamily. BPI/LBP family. As to expression, highly expressed in olfactory mucosa but undetectable in thymus, kidney, lung, brain, spleen and liver.

The protein resides in the secreted. It localises to the cytoplasm. Functionally, may have the capacity to recognize and bind specific classes of odorants. May act as a carrier molecule, transporting odorants across the mucus layer to access receptor sites. May serve as a primary defense mechanism by recognizing and removing potentially harmful odorants or pathogenic microorganisms from the mucosa or clearing excess odorant from mucus to enable new odorant stimuli to be received. This is BPI fold-containing family B member 4 (Bpifb4) from Rattus norvegicus (Rat).